The chain runs to 287 residues: Type 1 encapsulin shell protein EncA (287 aa).

Belongs to the encapsulin family. Family 1 subfamily. The 32 nm encapsulin nanocompartment is formed by 180 subunits; monomers form pentamers which assemble to form shells. There are 36 pores where the pentamers meet as well as 3-fold axis channels and dimer channels. The N-terminus of the protein is inside the shell.

It is found in the encapsulin nanocompartment. Shell component of a type 1, iron-storage encapsulin nanocompartment. Encapsulin nanocompartments are 32 nm in diameter with an iron- and phosphorus-rich core (4Fe:1P) about 24 nm in diameter. Upon expression in E.coli most particles are 32 nm, 20% are 18 nm. The core is filled with an average of 14 dense granules, 5-6 nm in diameter that are not evenly distributed. Each nanocompartment is estimated to hold 30,000-35,000 Fe atoms. The minor proteins EncB, EncC and EncD probably lie against the interior face of the nanocompartment. In Myxococcus xanthus (strain DK1622), this protein is Type 1 encapsulin shell protein EncA.